The following is a 154-amino-acid chain: Myoglobin (154 aa).

Positions 2 to 148 (GLSDGEWQLV…FRNDMATKYK (147 aa)) constitute a Globin domain. Ser-4 bears the Phosphoserine mark. Position 65 (His-65) interacts with nitrite. His-65 provides a ligand contact to O2. His-94 contributes to the heme b binding site.

The protein belongs to the globin family. In terms of assembly, monomeric.

It localises to the cytoplasm. It is found in the sarcoplasm. It catalyses the reaction Fe(III)-heme b-[protein] + nitric oxide + H2O = Fe(II)-heme b-[protein] + nitrite + 2 H(+). The enzyme catalyses H2O2 + AH2 = A + 2 H2O. In terms of biological role, monomeric heme protein which primary function is to store oxygen and facilitate its diffusion within muscle tissues. Reversibly binds oxygen through a pentacoordinated heme iron and enables its timely and efficient release as needed during periods of heightened demand. Depending on the oxidative conditions of tissues and cells, and in addition to its ability to bind oxygen, it also has a nitrite reductase activity whereby it regulates the production of bioactive nitric oxide. Under stress conditions, like hypoxia and anoxia, it also protects cells against reactive oxygen species thanks to its pseudoperoxidase activity. In Tachyglossus aculeatus aculeatus (Southeast Australian short-beaked echidna), this protein is Myoglobin (MB).